We begin with the raw amino-acid sequence, 37 residues long: Large ribosomal subunit protein bL36 (37 aa).

It belongs to the bacterial ribosomal protein bL36 family.

The chain is Large ribosomal subunit protein bL36 from Maridesulfovibrio salexigens (strain ATCC 14822 / DSM 2638 / NCIMB 8403 / VKM B-1763) (Desulfovibrio salexigens).